The primary structure comprises 1303 residues: Phosphoribosylformylglycinamidine synthase (1303 aa).

Residues 308-319 (GASTGSGGEIRD) and Ala-679 contribute to the ATP site. Residues Glu-719, Asn-723, and Asp-892 each coordinate Mg(2+). The disordered stretch occupies residues 1003-1023 (LRDNPACADQEHEAKKDNSDP). Residues 1011 to 1021 (DQEHEAKKDNS) show a composition bias toward basic and acidic residues. Residues 1050 to 1303 (MAILREQGVN…MFQNARKNIG (254 aa)) form the Glutamine amidotransferase type-1 domain. Cys-1143 (nucleophile) is an active-site residue. Residues His-1268 and Glu-1270 contribute to the active site.

In the N-terminal section; belongs to the FGAMS family. Monomer.

The protein localises to the cytoplasm. It carries out the reaction N(2)-formyl-N(1)-(5-phospho-beta-D-ribosyl)glycinamide + L-glutamine + ATP + H2O = 2-formamido-N(1)-(5-O-phospho-beta-D-ribosyl)acetamidine + L-glutamate + ADP + phosphate + H(+). Its pathway is purine metabolism; IMP biosynthesis via de novo pathway; 5-amino-1-(5-phospho-D-ribosyl)imidazole from N(2)-formyl-N(1)-(5-phospho-D-ribosyl)glycinamide: step 1/2. Its function is as follows. Phosphoribosylformylglycinamidine synthase involved in the purines biosynthetic pathway. Catalyzes the ATP-dependent conversion of formylglycinamide ribonucleotide (FGAR) and glutamine to yield formylglycinamidine ribonucleotide (FGAM) and glutamate. This is Phosphoribosylformylglycinamidine synthase from Aliivibrio fischeri (strain ATCC 700601 / ES114) (Vibrio fischeri).